We begin with the raw amino-acid sequence, 317 residues long: Alkylsulfatase (317 aa).

Position 78 (histidine 78) interacts with substrate. Histidine 105 and aspartate 107 together coordinate Fe cation. Residue valine 108 coordinates substrate. 2-oxoglutarate is bound at residue threonine 132. Position 261 (histidine 261) interacts with Fe cation. 2-oxoglutarate contacts are provided by arginine 272 and arginine 276.

It belongs to the TfdA dioxygenase family. Homotetramer. The cofactor is Fe(2+).

Functionally, alpha-ketoglutarate-dependent dioxygenase that in vitro catalyzes the oxygenolytic release of sulfite from hexylsulfate. The chain is Alkylsulfatase from Acinetobacter baylyi (strain ATCC 33305 / BD413 / ADP1).